Consider the following 261-residue polypeptide: Probable pectin methylesterase CGR2 (261 aa).

Residues 1–35 (MARRQVGSTRRVGDGGSFPFAGALHSKSRSSPLLS) are Cytoplasmic-facing. The helical transmembrane segment at 36-56 (ICLVLVGACLLIGYAYSGPGI) threads the bilayer. The Lumenal segment spans residues 57-261 (FKSIKEVSKV…CQVFHLKPLH (205 aa)). N-linked (GlcNAc...) asparagine glycosylation occurs at Asn-174.

This sequence belongs to the class I-like SAM-binding methyltransferase superfamily.

It is found in the golgi apparatus membrane. Functionally, together with CGR3, required for homogalacturonan pectins (HG) methylesterification in the Golgi apparatus prior to integration into cell walls, essential for general growth and development. Promotes rosette growth. Impacts carbon (C) partitioning, photosynthesis and respiration efficiency by influencing leaf mesophyll cell walls morphology and physiology; pectin methylesterification modulates both expansion and positioning of cells in leaves, probably by changing cell walls plasticity. The sequence is that of Probable pectin methylesterase CGR2 from Arabidopsis thaliana (Mouse-ear cress).